Here is a 481-residue protein sequence, read N- to C-terminus: WASH complex subunit 1 (481 aa).

The segment at 1 to 54 (MVRMTQKRYLEGQVYSVPLIQPDLRREEAVHQITDALQYLEMISTDIFTRVSES) is required for WASH complex assembly. Disordered stretches follow at residues 273-417 (SVPA…SGGD) and 429-481 (RRKG…DWEA). A compositionally biased stretch (pro residues) spans 304-341 (APPPPPPPPPPPPEPTHVPVPPPGTSAAPPPPPPPPPM). The interval 359-481 (KGAPSEVVQP…AADDEDDWEA (123 aa)) is VCA. The region spanning 371–393 (GRASLLESIRNAGGIGKANLRNV) is the WH2 domain. Basic and acidic residues predominate over residues 392–407 (NVKERKMEKKKQKEQE).

Belongs to the WASH1 family. In terms of assembly, component of the WASH complex.

Its subcellular location is the early endosome membrane. The protein localises to the recycling endosome membrane. Acts as a nucleation-promoting factor at the surface of endosomes, where it recruits and activates the Arp2/3 complex to induce actin polymerization, playing a key role in the fission of tubules that serve as transport intermediates during endosome sorting. This Danio rerio (Zebrafish) protein is WASH complex subunit 1.